Here is a 93-residue protein sequence, read N- to C-terminus: Cytochrome c oxidase polypeptide 6, mitochondrial (93 aa).

Residues 2-33 (STGNESYNLRYPKGFKGYPYNMYKLEGYGTPK) lie on the Mitochondrial matrix side of the membrane. A helical transmembrane segment spans residues 34–53 (GYITLIGVVATLTVSGLFFA). At 54–93 (KTRSNKREYPTHNKEWRAKTLAYAKETNADPIYQLPKDKI) the chain is on the mitochondrial intermembrane side.

Belongs to the cytochrome c oxidase IV family. As to quaternary structure, component of the cytochrome c oxidase (complex IV, CIV), a multisubunit enzyme composed of a catalytic core of 3 subunits and seevral supernumerary subunits. The complex exists as a monomer or a dimer and forms supercomplexes (SCs) in the inner mitochondrial membrane with ubiquinol-cytochrome c oxidoreductase (cytochrome b-c1 complex, complex III, CIII).

It is found in the mitochondrion inner membrane. It functions in the pathway energy metabolism; oxidative phosphorylation. Its function is as follows. Component of the cytochrome c oxidase, the last enzyme in the mitochondrial electron transport chain which drives oxidative phosphorylation. The respiratory chain contains 3 multisubunit complexes succinate dehydrogenase (complex II, CII), ubiquinol-cytochrome c oxidoreductase (cytochrome b-c1 complex, complex III, CIII) and cytochrome c oxidase (complex IV, CIV), that cooperate to transfer electrons derived from NADH and succinate to molecular oxygen, creating an electrochemical gradient over the inner membrane that drives transmembrane transport and the ATP synthase. Cytochrome c oxidase is the component of the respiratory chain that catalyzes the reduction of oxygen to water. Electrons originating from reduced cytochrome c in the intermembrane space (IMS) are transferred via the dinuclear copper A center (CU(A)) of subunit 2 and heme A of subunit 1 to the active site in subunit 1, a binuclear center (BNC) formed by heme A3 and copper B (CU(B)). The BNC reduces molecular oxygen to 2 water molecules using 4 electrons from cytochrome c in the IMS and 4 protons from the mitochondrial matrix. The chain is Cytochrome c oxidase polypeptide 6, mitochondrial (cxfA) from Dictyostelium discoideum (Social amoeba).